We begin with the raw amino-acid sequence, 385 residues long: Galactokinase (385 aa).

34-37 (EHTD) contacts substrate. 124-130 (SSGLSSS) lines the ATP pocket. Mg(2+)-binding residues include S130 and E162. The active-site Proton acceptor is the D174. Y223 lines the substrate pocket.

Belongs to the GHMP kinase family. GalK subfamily.

It is found in the cytoplasm. The catalysed reaction is alpha-D-galactose + ATP = alpha-D-galactose 1-phosphate + ADP + H(+). It functions in the pathway carbohydrate metabolism; galactose metabolism. Its function is as follows. Catalyzes the transfer of the gamma-phosphate of ATP to D-galactose to form alpha-D-galactose-1-phosphate (Gal-1-P). The chain is Galactokinase from Actinobacillus succinogenes (strain ATCC 55618 / DSM 22257 / CCUG 43843 / 130Z).